Reading from the N-terminus, the 584-residue chain is Methionine--tRNA ligase (584 aa).

Residues 12–22 (PYANGDLHLGH) carry the 'HIGH' region motif. Cys144, Cys147, Cys157, and Cys160 together coordinate Zn(2+). The 'KMSKS' region signature appears at 334–338 (QFSTS). An ATP-binding site is contributed by Thr337. A disordered region spans residues 541-563 (EGRDRWAPSELEAGRPLPPPQPL).

Belongs to the class-I aminoacyl-tRNA synthetase family. MetG type 1 subfamily. As to quaternary structure, monomer. The cofactor is Zn(2+).

It is found in the cytoplasm. The catalysed reaction is tRNA(Met) + L-methionine + ATP = L-methionyl-tRNA(Met) + AMP + diphosphate. Is required not only for elongation of protein synthesis but also for the initiation of all mRNA translation through initiator tRNA(fMet) aminoacylation. The sequence is that of Methionine--tRNA ligase from Thermomicrobium roseum (strain ATCC 27502 / DSM 5159 / P-2).